A 430-amino-acid polypeptide reads, in one-letter code: Serine--tRNA ligase (430 aa).

238–240 (TAE) provides a ligand contact to L-serine. 269–271 (RRE) contributes to the ATP binding site. L-serine is bound at residue Glu-292. An ATP-binding site is contributed by 356–359 (EISS). Ser-392 contributes to the L-serine binding site.

The protein belongs to the class-II aminoacyl-tRNA synthetase family. Type-1 seryl-tRNA synthetase subfamily. In terms of assembly, homodimer. The tRNA molecule binds across the dimer.

The protein localises to the cytoplasm. It carries out the reaction tRNA(Ser) + L-serine + ATP = L-seryl-tRNA(Ser) + AMP + diphosphate + H(+). The enzyme catalyses tRNA(Sec) + L-serine + ATP = L-seryl-tRNA(Sec) + AMP + diphosphate + H(+). It participates in aminoacyl-tRNA biosynthesis; selenocysteinyl-tRNA(Sec) biosynthesis; L-seryl-tRNA(Sec) from L-serine and tRNA(Sec): step 1/1. Catalyzes the attachment of serine to tRNA(Ser). Is also able to aminoacylate tRNA(Sec) with serine, to form the misacylated tRNA L-seryl-tRNA(Sec), which will be further converted into selenocysteinyl-tRNA(Sec). The sequence is that of Serine--tRNA ligase from Synechocystis sp. (strain ATCC 27184 / PCC 6803 / Kazusa).